The sequence spans 43 residues: uncharacterized protein (43 aa).

This is an uncharacterized protein from Sinorhizobium fredii (strain NBRC 101917 / NGR234).